A 1470-amino-acid polypeptide reads, in one-letter code: Niemann-Pick type C1-related protein (1470 aa).

At 1–3 (MFV) the chain is on the cytoplasmic side. The stretch at 4 to 34 (KNFIHKLKELKQKSLDKFANLLYDYGGYVYD) is an intramembrane region. Position 35 (Arg-35) is a topological domain, cytoplasmic. The chain crosses the membrane as a helical span at residues 36–56 (PCTFIICSLICCLLLTCGFYF). The Extracellular portion of the chain corresponds to 57-493 (KEHEKDIYKL…DEVDRISKID (437 aa)). Residues Asn-78, Asn-165, Asn-294, and Asn-361 are each glycosylated (N-linked (GlcNAc...) asparagine). Residues 494–514 (NLTRLLLLIGVLLIFMYALFN) traverse the membrane as a helical segment. The region spanning 494-653 (NLTRLLLLIG…LTFLLSFLCI (160 aa)) is the SSD domain. Over 515-524 (NVTSVLYRSK) the chain is Cytoplasmic. A helical membrane pass occupies residues 525–549 (PLCAVMGIFCGFLGFLSGSGFLYFL). Residues 550–554 (GVKSV) lie on the Extracellular side of the membrane. A helical membrane pass occupies residues 555–582 (PPAETVPFLVIGVGVDDVFVILNSYSLL). Topologically, residues 583–587 (FMVKD) are cytoplasmic. The helical transmembrane segment at 588–619 (NKKRIQMCLKDSALAITVTTLTNIIAFLISAI) threads the bilayer. At 620-622 (SPF) the chain is on the extracellular side. Residues 623 to 659 (YSICAFSLFTASSLFFGYLMVLTFLLSFLCIEAKLEK) form a helical membrane-spanning segment. At 660-663 (KKRN) the chain is on the cytoplasmic side. An intramembrane segment occupies 664–673 (IFTGTFHLFR). The Cytoplasmic segment spans residues 674 to 1057 (SIFMKSSKKN…IYEEPKGNIG (384 aa)). The stretch at 1058 to 1073 (KYFRSLVKNYYVPFLS) is an intramembrane region. Position 1074 (Ser-1074) is a topological domain, cytoplasmic. A helical membrane pass occupies residues 1075-1098 (RFGKTIVYIMFTIIIAMSIYGCTL). Topologically, residues 1099–1300 (MKKGIKYDKA…NHNVQMVCFH (202 aa)) are extracellular. N-linked (GlcNAc...) asparagine glycosylation occurs at Asn-1218. A helical membrane pass occupies residues 1301–1334 (LSSIFNETDESIIEVTLINLGITILTILVVTAYI). Topologically, residues 1335–1337 (IKG) are cytoplasmic. A helical transmembrane segment spans residues 1338–1361 (FYSCVIIALIIFLIDLCIFGFMCL). The Extracellular portion of the chain corresponds to 1362–1367 (CGITMN). Residues 1368–1394 (IISMVILVLSVGFSIDHTSHIVQAFSH) traverse the membrane as a helical segment. The Cytoplasmic portion of the chain corresponds to 1395 to 1399 (SMGRT). A helical transmembrane segment spans residues 1400–1431 (RDEKMKESLHLMIGPVLHSGLSTWFVISTLFF). Residues 1432–1434 (SNK) are Extracellular-facing. The chain crosses the membrane as a helical span at residues 1435-1466 (DFTVIFFQTLSLVLFFSITFSSMFLPVLLSSF). Residues 1467-1470 (GPLH) lie on the Cytoplasmic side of the membrane.

It belongs to the patched family.

It is found in the cell membrane. It carries out the reaction cholesterol(in) = cholesterol(out). In terms of biological role, facilitates cholesterol efflux from membranes in a pH-dependent manner. Required for maintaining normal parasite plasma membrane lipid composition. Required for the proper functioning of digestive vacuole. Required for the viability of blood-stage parasites. The sequence is that of Niemann-Pick type C1-related protein from Plasmodium falciparum (isolate 3D7).